Consider the following 789-residue polypeptide: Larval serum protein 1 beta chain (789 aa).

The first 16 residues, 1-16 (MKIAIALLACLGLAAA), serve as a signal peptide directing secretion.

This sequence belongs to the hemocyanin family. Heterohexamer, composed of three subunits, alpha, beta and gamma. As to expression, larval hemolymph.

It is found in the secreted. The protein localises to the extracellular space. Functionally, larval storage protein (LSP) which may serve as a store of amino acids for synthesis of adult proteins. In Drosophila melanogaster (Fruit fly), this protein is Larval serum protein 1 beta chain (Lsp1beta).